The sequence spans 76 residues: MSLCISDYLYLTLTFSKYERQKDKRPYSERKNQYTGPQFLYPPERIPPQKVIKWNEEGLPIYEIPGEGGHAEPAAA.

The propeptide at 1-14 (MSLCISDYLYLTLT) is removed in mature form.

Its function is as follows. Displays antimicrobial activity against the Gram-positive bacteria B.subtilis ATCC 62037, S.aureus ATCC 15752 and S.mutans ATCC 25175, the Gram-negative bacteria E.coli ATCC 27325, P.putida ATCC 17426 and Serratia sp. ATCC 21074, and the fungi C.albicans ATCC 10231, C.neoformans ATCC 34881 and S.cerevisiae ATCC 44774. Does not possess hemolytic activity. This is Antimicrobial peptide lumbricin-1 from Lumbricus rubellus (Humus earthworm).